Here is a 181-residue protein sequence, read N- to C-terminus: uncharacterized protein (181 aa).

Helical transmembrane passes span 3–23 (LSQT…VLIL), 67–87 (ALLL…GLSV), 92–112 (VLGV…VLFI), and 159–179 (MFIL…LWII).

The protein belongs to the YggT family.

It is found in the cell membrane. This is an uncharacterized protein from Haemophilus influenzae (strain ATCC 51907 / DSM 11121 / KW20 / Rd).